Reading from the N-terminus, the 284-residue chain is Phosphonates import ATP-binding protein PhnC 2 (284 aa).

The 241-residue stretch at 24-264 (IRIDGISVRR…LEARIFPSLA (241 aa)) folds into the ABC transporter domain. 56-63 (GPSGVGKT) lines the ATP pocket.

This sequence belongs to the ABC transporter superfamily. Phosphonates importer (TC 3.A.1.9.1) family. The complex is composed of two ATP-binding proteins (PhnC), two transmembrane proteins (PhnE) and a solute-binding protein (PhnD).

It is found in the cell inner membrane. The catalysed reaction is phosphonate(out) + ATP + H2O = phosphonate(in) + ADP + phosphate + H(+). Its function is as follows. Part of the ABC transporter complex PhnCDE involved in phosphonates import. Responsible for energy coupling to the transport system. The chain is Phosphonates import ATP-binding protein PhnC 2 from Rhodopseudomonas palustris (strain ATCC BAA-98 / CGA009).